We begin with the raw amino-acid sequence, 145 residues long: MTTSSGSRIGGLLHASLFSLLGLGLLLAGGFKTVERYHFLRTAQEAQGTVSALNAGGSHPQIDFTSVSGERISYPQGGFIFGYQVGEPVRVLYEAGRPAASAIVDDAGALWGTGAFLCGFGALFGIVGFRGLLGLRSSQPTSKGH.

A run of 2 helical transmembrane segments spans residues 9 to 29 (IGGLLHASLFSLLGLGLLLAG) and 109 to 129 (ALWGTGAFLCGFGALFGIVGF).

It is found in the membrane. Immunity protein that plays a role in preventing early activation of toxin Tse4. In Pseudomonas aeruginosa (strain ATCC 15692 / DSM 22644 / CIP 104116 / JCM 14847 / LMG 12228 / 1C / PRS 101 / PAO1), this protein is Immune protein Tsi4.